Consider the following 260-residue polypeptide: MADS-box transcription factor 29 (260 aa).

The region spanning Met1–Thr61 is the MADS-box domain. A K-box domain is found at Asp85–Gln175.

In terms of tissue distribution, expressed in developing seeds.

The protein resides in the nucleus. Probable transcription factor. The sequence is that of MADS-box transcription factor 29 (MADS29) from Oryza sativa subsp. japonica (Rice).